A 283-amino-acid chain; its full sequence is Phospholipase C (283 aa).

Residues 1–24 (MKKKVLALGAAITLVAPLQSVAFA) form the signal peptide. Positions 25–38 (HENDGGQRFGVIPR) are excised as a propeptide. W39, H52, D93, H107, H156, D160, H166, H180, and E184 together coordinate Zn(2+). Residues 39–283 (WSAEDKHKEG…QLWFDTYGNR (245 aa)) form the Zn-dependent PLC domain.

This sequence belongs to the bacterial zinc-metallophospholipase C family. Monomer. It depends on Zn(2+) as a cofactor.

It carries out the reaction a 1,2-diacyl-sn-glycero-3-phosphocholine + H2O = phosphocholine + a 1,2-diacyl-sn-glycerol + H(+). Its function is as follows. Required, with sphingomyelinase, to effect target cell lysis (hemolysis). The chain is Phospholipase C (cerA) from Bacillus cereus.